The sequence spans 1007 residues: Calmodulin-binding transcription activator 1 (1007 aa).

The CG-1 DNA-binding region spans 18–144; it reads MEQLLSEAQH…YLEVKGNRTS (127 aa). Polar residues predominate over residues 148 to 164; that stretch reads KENNSNSVNGTASVNID. The segment at 148-227 is disordered; that stretch reads KENNSNSVNG…VHGNRVRESD (80 aa). Residues 165-176 are compositionally biased toward low complexity; the sequence is STASPTSTLSSL. Residues 183 to 202 are compositionally biased toward polar residues; it reads GDSQQASSVLRPSPEPQTGN. The segment at 233–398 is transcription activation; the sequence is DVRALDTVGN…TVECETAAAG (166 aa). ANK repeat units lie at residues 612–641 and 645–674; these read DGQG…NINF and NGWS…DAGA. 2 consecutive IQ domains span residues 821–850 and 844–873; these read LSCA…RIVK and IRQR…SVGL. Positions 869–891 are calmodulin-binding; it reads WSVGLLEKIILRWRRKGNGLRGF. A coiled-coil region spans residues 915-943; it reads QEDEYDYLKEGRKQTEERLQKALTRVKSM. A Phosphoserine modification is found at Ser-942.

Belongs to the CAMTA family. Expressed in roots, stems, leaves, pollen and siliques.

The protein localises to the nucleus. In terms of biological role, transcription activator that binds calmodulin in a calcium-dependent manner in vitro. Binds to the DNA consensus sequence 5'-[ACG]CGCG[GTC]-3'. Regulates transcriptional activity in response to calcium signals. Involved in freezing tolerance. Involved in freezing tolerance in association with CAMTA2 and CAMTA3. Contributes together with CAMTA2 and CAMTA3 to the positive regulation of the cold-induced expression of DREB1A/CBF3, DREB1B/CBF1 and DREB1C/CBF2. Involved in drought stress responses by regulating several drought-responsive genes. Involved in auxin signaling and responses to abiotic stresses. Activates the expression of the V-PPase proton pump AVP1 in pollen. The protein is Calmodulin-binding transcription activator 1 of Arabidopsis thaliana (Mouse-ear cress).